The sequence spans 826 residues: Ferric-pyoverdine M114 receptor PbuA (826 aa).

The signal sequence occupies residues 1-44 (MSASRFMLRPLTRALLMHGATRTRLAGTGLGLALTLTAAPYVQA). Positions 110–119 (DGNTVTVLGP) match the TonB box motif. The 112-residue stretch at 160 to 271 (SLKETPQSVT…TAGGVNFVRK (112 aa)) folds into the TBDR plug domain. Residues 276–826 (TAHTQLSLSA…NFVMSVKADF (551 aa)) enclose the TBDR beta-barrel domain. Residues 809-826 (GNFYGDPRNFVMSVKADF) carry the TonB C-terminal box motif.

This sequence belongs to the TonB-dependent receptor family.

The protein localises to the cell outer membrane. In terms of biological role, specific receptor for the siderophore ferric pyoverdine (pseudobactin) M114. The chain is Ferric-pyoverdine M114 receptor PbuA (pbuA) from Pseudomonas sp. (strain M114).